We begin with the raw amino-acid sequence, 575 residues long: Septation ring formation regulator EzrA (575 aa).

The Extracellular segment spans residues 1 to 8 (MSNGQLIY). The helical transmembrane segment at 9–27 (LMVAIAVILVLAYVVAIFL) threads the bilayer. The Cytoplasmic portion of the chain corresponds to 28 to 575 (RKRNEGRLEA…YEKTRETIRF (548 aa)). Coiled coils occupy residues 110-191 (QIDQ…FVTL), 265-301 (LYEA…LYDI), 354-416 (VRRI…IEKD), and 456-526 (TASN…IQEA).

This sequence belongs to the EzrA family.

It localises to the cell membrane. Functionally, negative regulator of FtsZ ring formation; modulates the frequency and position of FtsZ ring formation. Inhibits FtsZ ring formation at polar sites. Interacts either with FtsZ or with one of its binding partners to promote depolymerization. In Streptococcus pneumoniae (strain JJA), this protein is Septation ring formation regulator EzrA.